Reading from the N-terminus, the 142-residue chain is Hemoglobin subunit zeta (142 aa).

Residue Ser2 is modified to N-acetylserine. The region spanning 2 to 142 (SLMKNERAII…LSSILTEKYR (141 aa)) is the Globin domain. The residue at position 29 (Thr29) is a Phosphothreonine. Position 53 is a phosphoserine (Ser53). His59 is a binding site for heme b. At Ser73 the chain carries Phosphoserine. Position 88 (His88) interacts with heme b.

It belongs to the globin family. Heterotetramer of two zeta chains and beta-type chains.

Functionally, the zeta chain is an alpha-type chain of mammalian embryonic hemoglobin. In Mus musculus (Mouse), this protein is Hemoglobin subunit zeta (Hbz).